A 634-amino-acid polypeptide reads, in one-letter code: Chaperone protein HtpG (634 aa).

Positions 1–344 (MSETATQNKE…SNDLPLNVSR (344 aa)) are a; substrate-binding. Positions 345–561 (EILQDNKVTQ…DFEMGTQMAK (217 aa)) are b. The segment at 562–634 (LLEAAGQAAP…GAINELLTKR (73 aa)) is c.

The protein belongs to the heat shock protein 90 family. As to quaternary structure, homodimer.

The protein localises to the cytoplasm. Functionally, molecular chaperone. Has ATPase activity. This chain is Chaperone protein HtpG, found in Vibrio atlanticus (strain LGP32) (Vibrio splendidus (strain Mel32)).